The sequence spans 166 residues: Ribosome maturation factor RimP (166 aa).

This sequence belongs to the RimP family.

It is found in the cytoplasm. Its function is as follows. Required for maturation of 30S ribosomal subunits. This chain is Ribosome maturation factor RimP, found in Psychrobacter sp. (strain PRwf-1).